The following is a 404-amino-acid chain: 26S proteasome regulatory subunit 6A-B (404 aa).

Gly192–Thr199 contributes to the ATP binding site.

It belongs to the AAA ATPase family. As to quaternary structure, may form a heterodimer with a related family member.

The protein resides in the cytoplasm. It localises to the nucleus. In terms of biological role, the 26S proteasome is involved in the ATP-dependent degradation of ubiquitinated proteins. The regulatory (or ATPase) complex confers ATP dependency and substrate specificity to the 26S complex. The chain is 26S proteasome regulatory subunit 6A-B (psmc3-b) from Xenopus laevis (African clawed frog).